The following is a 488-amino-acid chain: 3-octaprenyl-4-hydroxybenzoate carboxy-lyase (488 aa).

Asn-172 lines the Mn(2+) pocket. Prenylated FMN contacts are provided by residues 175-177 (IYR), 189-191 (RWL), and 194-195 (RG). Mn(2+) is bound at residue Glu-238. The active-site Proton donor is the Asp-287.

It belongs to the UbiD family. In terms of assembly, homohexamer. The cofactor is prenylated FMN. Requires Mn(2+) as cofactor.

The protein localises to the cell membrane. The catalysed reaction is a 4-hydroxy-3-(all-trans-polyprenyl)benzoate + H(+) = a 2-(all-trans-polyprenyl)phenol + CO2. It participates in cofactor biosynthesis; ubiquinone biosynthesis. In terms of biological role, catalyzes the decarboxylation of 3-octaprenyl-4-hydroxy benzoate to 2-octaprenylphenol, an intermediate step in ubiquinone biosynthesis. This chain is 3-octaprenyl-4-hydroxybenzoate carboxy-lyase, found in Halorhodospira halophila (strain DSM 244 / SL1) (Ectothiorhodospira halophila (strain DSM 244 / SL1)).